Reading from the N-terminus, the 893-residue chain is TBC domain-containing protein kinase-like protein (893 aa).

A Protein kinase domain is found at 1 to 273 (MFPLKDAEMG…PDQLMKDKVF (273 aa)). A Rab-GAP TBC domain is found at 466–651 (DIPPLMRGLT…HLWDTLLLGN (186 aa)). The tract at residues 710–749 (YRQHAQPPKPSSDSSGGRSSAPYFSAECPDPPKTDLSRES) is disordered. Over residues 720–729 (SSDSSGGRSS) the composition is skewed to low complexity. The 100-residue stretch at 790-889 (SKPKLLVVDI…IKPTGLLTIP (100 aa)) folds into the Rhodanese domain.

This sequence belongs to the protein kinase superfamily. In terms of assembly, component of the FERRY complex composed of five subunits, TBCK, PPP1R21, FERRY3, CRYZL1 and GATD1 with a ratio of 1:2:1:2:4, respectively.

It localises to the cytoplasm. The protein resides in the cytoskeleton. The protein localises to the spindle. Its subcellular location is the midbody. It is found in the early endosome. In terms of biological role, component of the FERRY complex (Five-subunit Endosomal Rab5 and RNA/ribosome intermediary). The FERRY complex directly interacts with mRNAs and RAB5A, and functions as a RAB5A effector involved in the localization and the distribution of specific mRNAs most likely by mediating their endosomal transport. The complex recruits mRNAs and ribosomes to early endosomes through direct mRNA-interaction. Also involved in the modulation of mTOR signaling and expression of mTOR complex components. Involved in the control of actin-cytoskeleton organization. The polypeptide is TBC domain-containing protein kinase-like protein (Homo sapiens (Human)).